Here is a 1220-residue protein sequence, read N- to C-terminus: ATP-dependent helicase/deoxyribonuclease subunit B (1220 aa).

The UvrD-like helicase ATP-binding domain occupies 1-281 (MSMRFIVGRA…VFLTETHRFE (281 aa)). Residue 8 to 15 (GRAGTGKS) coordinates ATP. A UvrD-like helicase C-terminal domain is found at 283 to 590 (AGLKHLERFY…LVGSLDRSRN (308 aa)). [4Fe-4S] cluster is bound at residue cysteine 788. The tract at residues 989–1008 (LAEGSKGSEGSEGSEDSEDS) is disordered. Cysteine 1128, cysteine 1131, and cysteine 1137 together coordinate [4Fe-4S] cluster. Polar residues predominate over residues 1162–1171 (RVQSQDSEQY). A disordered region spans residues 1162–1220 (RVQSQDSEQYPEQHPPTSVPGETSRRALQKDGGNSPRGQELIWLGEDEAGAGKEDDGHE). Residues 1211-1220 (GAGKEDDGHE) are compositionally biased toward basic and acidic residues.

The protein belongs to the helicase family. AddB/RexB type 1 subfamily. In terms of assembly, heterodimer of AddA and AddB. Mg(2+) is required as a cofactor. [4Fe-4S] cluster serves as cofactor.

The heterodimer acts as both an ATP-dependent DNA helicase and an ATP-dependent, dual-direction single-stranded exonuclease. Recognizes the chi site generating a DNA molecule suitable for the initiation of homologous recombination. The AddB subunit has 5' -&gt; 3' nuclease activity but not helicase activity. This chain is ATP-dependent helicase/deoxyribonuclease subunit B, found in Desulfitobacterium hafniense (strain Y51).